We begin with the raw amino-acid sequence, 408 residues long: MNVIQNLLSAVSPQPDGDFVDKLNYCATTIGLVLASAFITGWSFVGSPIDCWFPAYYKGWWAEYALDYCYVQNTFFVPFSEDKAERSYNWEQLVADKQNTTSLKQTNQIGYYQWVPFILALQAMLFYFPVVIWRLFYGMAGQNVTSLCNTCTATEGNEESRKGTITTIAGYISQKRHRNLIVKQLSGFQNRANGSAVITSYLFMKALFLINVLFQFVLLKRMLGVDSYFWGAEVTSDLWSGNEWPETGNFPRVTMCEYEVRNLDNIHKHSVQCVLMINMFNEKIFVALWWWLCFLTVVTITNTIYWFWRASGTSVSKNFIRPYVEDIDPKVKNNRGKLQQFVSEFLSPDTVFILRLIELNNGKTPVVELIRDMWRRFNTAVPPPYSAPPLLVKDGAPLLKNFQDESEM.

Residues 29–49 (TIGLVLASAFITGWSFVGSPI) traverse the membrane as a helical segment. An N-linked (GlcNAc...) asparagine glycan is attached at Asn-99. 3 helical membrane passes run 113–133 (QWVP…VVIW), 197–217 (VITS…FQFV), and 284–304 (IFVA…TNTI).

This sequence belongs to the pannexin family.

Its subcellular location is the cell membrane. The protein resides in the cell junction. It localises to the gap junction. Its function is as follows. Structural component of the gap junctions. Plays a role in oocyte directional transit in the spermatheca during ovulation by facilitating the directional propagation of the calcium signal in the spermatheca. Plays a role in male tail tip morphogenesis. The sequence is that of Innexin-12 from Caenorhabditis elegans.